The sequence spans 159 residues: Transcriptional repressor NrdR (159 aa).

A zinc finger spans residues 3-34; it reads CPYCQSEDTQVKDSRPAEDGAAIRRRRVCPDC. In terms of domain architecture, ATP-cone spans 49-139; that stretch reads LVVVKKSGRK…VYRNFREAKD (91 aa).

The protein belongs to the NrdR family. Zn(2+) is required as a cofactor.

In terms of biological role, negatively regulates transcription of bacterial ribonucleotide reductase nrd genes and operons by binding to NrdR-boxes. This chain is Transcriptional repressor NrdR, found in Mesorhizobium japonicum (strain LMG 29417 / CECT 9101 / MAFF 303099) (Mesorhizobium loti (strain MAFF 303099)).